We begin with the raw amino-acid sequence, 122 residues long: Large ribosomal subunit protein uL18 (122 aa).

Residues 1–20 show a composition bias toward basic residues; sequence MLKKVSKNTNRQGRHQRVRN. The disordered stretch occupies residues 1–22; the sequence is MLKKVSKNTNRQGRHQRVRNKI.

This sequence belongs to the universal ribosomal protein uL18 family. In terms of assembly, part of the 50S ribosomal subunit; part of the 5S rRNA/L5/L18/L25 subcomplex. Contacts the 5S and 23S rRNAs.

This is one of the proteins that bind and probably mediate the attachment of the 5S RNA into the large ribosomal subunit, where it forms part of the central protuberance. The polypeptide is Large ribosomal subunit protein uL18 (Alkaliphilus metalliredigens (strain QYMF)).